A 333-amino-acid chain; its full sequence is Photosystem II assembly lipoprotein Ycf48 (333 aa).

The first 23 residues, 1–23 (MTRFVSSAINLLLVLVLGVSLSG), serve as a signal peptide directing secretion. Cysteine 24 is lipidated: N-palmitoyl cysteine. Cysteine 24 carries the S-diacylglycerol cysteine lipid modification.

It belongs to the Ycf48 family. Part of early PSII assembly complexes which includes D1 (psbA) and PsbI; not found in mature PSII. Binds to the lumenal side of PSII complexes. Interacts with YidC.

It localises to the cellular thylakoid membrane. Functionally, a factor required for optimal assembly of photosystem II (PSII), acting in the early stages of PSII assembly. Also plays a role in replacement of photodamaged D1 (psbA). Assists YidC in synthesis of chlorophyll-binding proteins. The protein is Photosystem II assembly lipoprotein Ycf48 of Parasynechococcus marenigrum (strain WH8102).